Reading from the N-terminus, the 321-residue chain is Putative membrane-bound redox modulator Alx (321 aa).

The Periplasmic segment spans residues 1–6 (MNTVGT). Residues 7–27 (PLLWGGFAVVVAIMLAIDLLL) traverse the membrane as a helical segment. Residues 28–43 (QGRRGAHAMTMKQAAA) lie on the Cytoplasmic side of the membrane. The helical transmembrane segment at 44-64 (WSLVWVTLSLLFNAAFWWYLV) threads the bilayer. At 65–89 (QTEGRAVADPQALAFLTGYLIEKSL) the chain is on the periplasmic side. The chain crosses the membrane as a helical span at residues 90–110 (AVDNVFVWLMLFSYFSVPAAL). Residues 111 to 113 (QRR) lie on the Cytoplasmic side of the membrane. A helical membrane pass occupies residues 114–134 (VLVYGVLGAIVLRTIMIFTGS). Position 135 (Trp-135) is a topological domain, periplasmic. The helical transmembrane segment at 136-156 (LISQFDWILYIFGAFLLFTGV) threads the bilayer. Residues 157-198 (KMALAHEDESGIGDKPLVRWLRGHLRMTDTIDNEHFFVRKNG) lie on the Cytoplasmic side of the membrane. Residues 199 to 219 (LLYATPLMLVLILVELSDVIF) form a helical membrane-spanning segment. Topologically, residues 220–225 (AVDSIP) are periplasmic. Residues 226–246 (AIFAVTTDPFIVLTSNLFAIL) form a helical membrane-spanning segment. Topologically, residues 247 to 261 (GLRAMYFLLAGVAER) are cytoplasmic. A helical transmembrane segment spans residues 262–282 (FSMLKYGLAVILVFIGIKMLI). Over 283–286 (VDFY) the chain is Periplasmic. A helical transmembrane segment spans residues 287 to 307 (HIPIAVSLGVVFGILVMTFII). At 308-321 (NAWVNYRHDKQRVG) the chain is on the cytoplasmic side.

Belongs to the TerC family.

The protein resides in the cell inner membrane. Functionally, has been proposed to be a redox modulator. In Escherichia coli O157:H7, this protein is Putative membrane-bound redox modulator Alx (alx).